Consider the following 614-residue polypeptide: 2-succinyl-5-enolpyruvyl-6-hydroxy-3-cyclohexene-1-carboxylate synthase (614 aa).

It belongs to the TPP enzyme family. MenD subfamily. Homodimer. The cofactor is Mg(2+). Mn(2+) serves as cofactor. Requires thiamine diphosphate as cofactor.

It carries out the reaction isochorismate + 2-oxoglutarate + H(+) = 5-enolpyruvoyl-6-hydroxy-2-succinyl-cyclohex-3-ene-1-carboxylate + CO2. It functions in the pathway quinol/quinone metabolism; 1,4-dihydroxy-2-naphthoate biosynthesis; 1,4-dihydroxy-2-naphthoate from chorismate: step 2/7. The protein operates within quinol/quinone metabolism; menaquinone biosynthesis. Functionally, catalyzes the thiamine diphosphate-dependent decarboxylation of 2-oxoglutarate and the subsequent addition of the resulting succinic semialdehyde-thiamine pyrophosphate anion to isochorismate to yield 2-succinyl-5-enolpyruvyl-6-hydroxy-3-cyclohexene-1-carboxylate (SEPHCHC). The polypeptide is 2-succinyl-5-enolpyruvyl-6-hydroxy-3-cyclohexene-1-carboxylate synthase (Sorangium cellulosum (strain So ce56) (Polyangium cellulosum (strain So ce56))).